Consider the following 204-residue polypeptide: Synaptosomal-associated protein 25-A (204 aa).

A compositionally biased stretch (basic and acidic residues) spans 1–11 (MAEDADMRNEL). The disordered stretch occupies residues 1–25 (MAEDADMRNELSDMQQRADQLADES). T-SNARE coiled-coil homology domains follow at residues 19 to 81 (DQLA…LNDL) and 138 to 200 (DARE…ATKM).

This sequence belongs to the SNAP-25 family.

It localises to the synapse. It is found in the synaptosome. The protein resides in the cell membrane. May play an important role in the synaptic function of specific neuronal systems. Associates with proteins involved in vesicle docking and membrane fusion. The chain is Synaptosomal-associated protein 25-A (snap25a) from Carassius auratus (Goldfish).